Here is a 478-residue protein sequence, read N- to C-terminus: Septin-4 (478 aa).

Residues 1 to 115 form a disordered region; that stretch reads MDRSLGWQGN…RSPWGKLDPY (115 aa). Basic and acidic residues predominate over residues 13 to 26; it reads PEDRTEAGIKRFLE. The span at 95–108 shows a compositional bias: low complexity; sequence APAPLSPSARPRSP. 2 positions are modified to phosphoserine: Ser117 and Ser118. Positions 141–414 constitute a Septin-type G domain; the sequence is KGFDFTLMVA…ENYRAQCIQS (274 aa). A G1 motif region spans residues 151-158; sequence GESGLGKS. GTP is bound by residues 151–158 and Thr185; that span reads GESGLGKS. Residues 208–211 are G3 motif; the sequence is DTPG. The interval 289–292 is G4 motif; that stretch reads AKAD. 290–298 contributes to the GTP binding site; that stretch reads KADTLTPPE. At Ser325 the chain carries Phosphoserine. Gly348 and Arg363 together coordinate GTP. The tract at residues 428 to 448 is disordered; sequence LTRESGTDFPIPAVPPGTDPE. Ser432 carries the phosphoserine modification. Thr434 is subject to Phosphothreonine. Residues 447–478 adopt a coiled-coil conformation; it reads PETEKLIREKDEELRRMQEMLHKIQKQMKENY.

The protein belongs to the TRAFAC class TrmE-Era-EngA-EngB-Septin-like GTPase superfamily. Septin GTPase family. As to quaternary structure, septins polymerize into heterooligomeric protein complexes that form filaments, and can associate with cellular membranes, actin filaments and microtubules. GTPase activity is required for filament formation. Interacts with SEPTIN8. In a mesenchymal cell line, interacts with SEPTIN9 isoform 2 variants HNA Trp-106 and Phe-111, but not the wild type SEPTIN9. Component of a septin core octameric complex consisting of SEPTIN12, SEPTIN7, SEPTIN6 and SEPTIN2 or SEPTIN4 in the order 12-7-6-2-2-6-7-12 or 12-7-6-4-4-6-7-12. Interacts with SEPTIN14 (via C-terminus). Interacts with DYRK1A. Interacts with SLC6A3/DAT and SNCA/alpha-synuclein. Interacts with STX1A; in the striatum. Interacts with XIAP (via BIR3 domain) following the induction of apoptosis. Interacts with AREL1 (via HECT domain); in the cytoplasm following induction of apoptosis. In terms of assembly, part of a complex composed of SEPTIN4 isoform ARTS, XIAP and BCL2, within the complex interacts with both BCL2 (via BH3 domain) and XIAP, ARTS acts as a scaffold protein and stabilizes the complex. Interacts with XIAP (via BIR3 domain) following the induction of apoptosis. Phosphorylated by DYRK1A. Post-translationally, ubiquitinated by AREL1. Widely expressed in adult and fetal tissues with highest expression in adult brain (at protein level), heart, liver and adrenal gland and fetal heart, kidney, liver and lung. Expressed in presynaptic terminals of dopaminergic neurons projecting from the substantia nigra pars compacta to the striatum (at protein level). Expressed in axonal varicosities in dopaminergic nerve terminals (at protein level). Expressed in the putamen and in the adjacent cerebral cortex (at protein level). Expressed in colonic crypts (at protein level). Also expressed in colorectal cancers and malignant melanomas. Expressed in platelets. In terms of tissue distribution, highly expressed in the brain and heart.

It localises to the cytoplasm. It is found in the cell projection. The protein localises to the cilium. The protein resides in the flagellum. Its subcellular location is the cytoplasmic vesicle. It localises to the secretory vesicle. It is found in the axon. The protein localises to the dendrite. The protein resides in the perikaryon. Its subcellular location is the synapse. It localises to the mitochondrion. It is found in the nucleus. Functionally, filament-forming cytoskeletal GTPase. Pro-apoptotic protein involved in LGR5-positive intestinal stem cell and Paneth cell expansion in the intestines, via its interaction with XIAP. May also play a role in the regulation of cell fate in the intestine. Positive regulator of apoptosis involved in hematopoietic stem cell homeostasis; via its interaction with XIAP. Negative regulator of repair and hair follicle regeneration in response to injury, due to inhibition of hair follicle stem cell proliferation, potentially via its interaction with XIAP. Plays an important role in male fertility and sperm motility. During spermiogenesis, essential for the establishment of the annulus (a fibrous ring structure connecting the midpiece and the principal piece of the sperm flagellum) which is a requisite for the structural and mechanical integrity of the sperm. Involved in the migration of cortical neurons and the formation of neuron leading processes during embryonic development. Required for dopaminergic metabolism in presynaptic autoreceptors; potentially via activity as a presynaptic scaffold protein. Its function is as follows. Required for the induction of cell death mediated by TGF-beta and possibly by other apoptotic stimuli. Induces apoptosis through binding and inhibition of XIAP resulting in significant reduction in XIAP levels, leading to caspase activation and cell death. Mediates the interaction between BCL2 and XIAP, thereby positively regulating the ubiquitination and degradation of BCL2 and promoting apoptosis. The sequence is that of Septin-4 from Homo sapiens (Human).